The sequence spans 332 residues: Protein phosphatase PTC7 homolog fig (332 aa).

Residues 70-325 enclose the PPM-type phosphatase domain; it reads KPCSPRERAN…DDITLILASV (256 aa). Mn(2+) is bound by residues aspartate 102, glycine 103, and aspartate 247.

The protein belongs to the PP2C family. It depends on Mg(2+) as a cofactor. Requires Mn(2+) as cofactor.

The catalysed reaction is O-phospho-L-seryl-[protein] + H2O = L-seryl-[protein] + phosphate. It carries out the reaction O-phospho-L-threonyl-[protein] + H2O = L-threonyl-[protein] + phosphate. The protein is Protein phosphatase PTC7 homolog fig of Drosophila ananassae (Fruit fly).